The sequence spans 128 residues: MWKERAMEEMKKAGLRLTPQRLKLIEVIEKIGGRHPTLKEVYEEVVKEFPTMSFSTLYSNLLIFRGLGLLDFFTLEGETRVEVNCEPHFNVIEREEIRDFVDEELIGEIERRLGRNVKVVNVFMEDRD.

The protein belongs to the Fur family.

The chain is Ferric uptake regulation protein homolog from Archaeoglobus fulgidus (strain ATCC 49558 / DSM 4304 / JCM 9628 / NBRC 100126 / VC-16).